Reading from the N-terminus, the 214-residue chain is uncharacterized protein (214 aa).

A signal peptide spans Met-1–Ala-24. Residues Ala-99–Thr-121 form a disordered region. The segment covering Pro-100 to Thr-109 has biased composition (polar residues).

As to expression, component of the acid-insoluble and acid-soluble organic matrix of the aragonitic skeleton (at protein level).

It is found in the secreted. This is an uncharacterized protein from Acropora millepora (Staghorn coral).